A 349-amino-acid chain; its full sequence is Desmethyl-yatein O-methyltransferase (349 aa).

Residues Gly-193, Asp-216, Asp-236, Met-237, Met-249, and Lys-250 each coordinate S-adenosyl-L-homocysteine. The active-site Proton acceptor is His-254. Residues Glu-282 and Glu-314 contribute to the active site.

The protein belongs to the class I-like SAM-binding methyltransferase superfamily. Cation-independent O-methyltransferase family. COMT subfamily. In terms of assembly, homodimer. In terms of tissue distribution, mostly expressed in stems, and, to a lower extent, in leaves.

The enzyme catalyses (-)-5'-demethylyatein + S-adenosyl-L-methionine = (-)-yatein + S-adenosyl-L-homocysteine + H(+). Its pathway is aromatic compound metabolism; phenylpropanoid biosynthesis. O-methyltransferase involved in the biosynthesis of etoposide, a chemotherapeutic compound of the topoisomerase inhibitor family. Catalyzes the methylation of (-)-5'-demethylyatein to produce (-)-yatein. In Sinopodophyllum hexandrum (Himalayan may apple), this protein is Desmethyl-yatein O-methyltransferase.